The following is a 579-amino-acid chain: UPF0324 membrane protein DVU_2133 (579 aa).

11 helical membrane-spanning segments follow: residues 26-45 (YWAI…LFLA), 193-215 (PFNI…AVGM), 225-243 (FLVG…LMMG), 250-272 (YWGI…TVGT), 305-327 (IGIP…TFIF), 369-391 (LTLA…PAFI), 401-423 (GGAW…AFLG), 436-456 (IQNV…CARV), 476-495 (FVLG…GSLG), 515-534 (LRNW…TNFR), and 549-571 (YVAG…FYIV).

It belongs to the UPF0324 family.

Its subcellular location is the cell membrane. The protein is UPF0324 membrane protein DVU_2133 of Nitratidesulfovibrio vulgaris (strain ATCC 29579 / DSM 644 / CCUG 34227 / NCIMB 8303 / VKM B-1760 / Hildenborough) (Desulfovibrio vulgaris).